The following is a 66-amino-acid chain: Prophage transcriptional regulatory protein (66 aa).

This is Prophage transcriptional regulatory protein (croE) from Escherichia coli (strain K12).